The chain runs to 401 residues: MADAATEAAGLRNFTINFGPQHPAAHGVLRLVLELDGEVVERVDPHIGLLHRGTEKLIEQKTYLQAIPYFDRLDYVAPMNQEHAFCLAAEKLLGIEAPRRAQLIRVLYCEIGRILSHLLNVTTQAMDVGALTPPLWGFEEREKLMMFYERASGSRMHAAYFRIGGVHQDLPPKLIDDIDNWCDNFIQTVDDLETLLTDNRIFKQRNVDIGVVTLEQAWEWGFSGVMVRGSGAAWDLRKSQPYECYAEMDFDVPIGKNGDCYDRYCIRVEEMRQSVRIMKQCIAKMREPAGQGRVAVDDNKIFPPRRGEMKRSMESLIHHFKLYTEGFRVPAGEVYVAVEAPKGEFGVYLVSDGTNKPYKCKVRAPGFAHLQAMDFICRGHLLADVSAILGSLDIVFGEVDR.

It belongs to the complex I 49 kDa subunit family. In terms of assembly, NDH-1 is composed of 14 different subunits. Subunits NuoB, C, D, E, F, and G constitute the peripheral sector of the complex.

The protein resides in the cell inner membrane. The enzyme catalyses a quinone + NADH + 5 H(+)(in) = a quinol + NAD(+) + 4 H(+)(out). NDH-1 shuttles electrons from NADH, via FMN and iron-sulfur (Fe-S) centers, to quinones in the respiratory chain. The immediate electron acceptor for the enzyme in this species is believed to be ubiquinone. Couples the redox reaction to proton translocation (for every two electrons transferred, four hydrogen ions are translocated across the cytoplasmic membrane), and thus conserves the redox energy in a proton gradient. The sequence is that of NADH-quinone oxidoreductase subunit D from Rhodopseudomonas palustris (strain HaA2).